A 345-amino-acid chain; its full sequence is Transmembrane protein 144 homolog (345 aa).

The next 10 membrane-spanning stretches (helical) occupy residues 3–23, 32–52, 61–81, 84–104, 120–140, 193–213, 233–253, 265–285, 293–313, and 324–344; these read IAVG…MFVP, GIFV…VVYS, PLAM…VPIM, IGIG…GWAA, PFLN…FSQI, LAII…VPVI, VFSH…GYVI, LVGP…SWFV, AVSF…WSVF, and LRLL…VGVS.

This sequence belongs to the TMEM144 family.

It is found in the membrane. This chain is Transmembrane protein 144 homolog, found in Caenorhabditis elegans.